The following is a 63-amino-acid chain: Cecropin-B (63 aa).

Positions 1–23 (MNFNKIFVFVALILAISLGNSEA) are cleaved as a signal peptide. At R62 the chain carries Arginine amide.

It belongs to the cecropin family. In terms of tissue distribution, strongly expressed in larval, pupal and adult fat body and hemocytes after injection of bacteria. Maximal expression is seen in pupae.

The protein localises to the secreted. Its function is as follows. Cecropins have lytic and antibacterial activity against several Gram-positive and Gram-negative bacteria. The polypeptide is Cecropin-B (CecB) (Drosophila melanogaster (Fruit fly)).